A 111-amino-acid polypeptide reads, in one-letter code: Prophage-derived-like uncharacterized protein YozM (111 aa).

The N-terminal stretch at 1 to 24 is a signal peptide; sequence MKKRLIGFLVLVPALIMWGITLIE.

The polypeptide is Prophage-derived-like uncharacterized protein YozM (yozM) (Bacillus subtilis (strain 168)).